The chain runs to 372 residues: Probable leucine aminopeptidase MCYG_03459 (372 aa).

A signal peptide spans 1–18 (MKISTLAVVSAFAVTAIA). A glycan (N-linked (GlcNAc...) asparagine) is linked at asparagine 95. 2 residues coordinate Zn(2+): histidine 175 and aspartate 194. Residues asparagine 195 and asparagine 219 are each glycosylated (N-linked (GlcNAc...) asparagine). Zn(2+)-binding residues include glutamate 233 and aspartate 260. Cysteines 305 and 309 form a disulfide. Zn(2+) is bound at residue histidine 338.

Belongs to the peptidase M28 family. M28E subfamily. In terms of assembly, monomer. The cofactor is Zn(2+).

It localises to the secreted. Functionally, probable extracellular aminopeptidase which contributes to pathogenicity. This Arthroderma otae (strain ATCC MYA-4605 / CBS 113480) (Microsporum canis) protein is Probable leucine aminopeptidase MCYG_03459.